The sequence spans 413 residues: Cyclic AMP-dependent transcription factor ATF-7 (413 aa).

Residues 1–285 (MGDDRPFVCS…GMVVGTASTM (285 aa)) form a transactivation domain region. A C2H2-type zinc finger spans residues 7–31 (FVCSAPGCGQRFTNEDHLAVHKHKH). Thr-51 carries the phosphothreonine; by MAPK11 modification. 2 positions are modified to phosphothreonine: Thr-53 and Thr-101. Disordered stretches follow at residues 81–140 (ASDD…TTKP) and 299–337 (HPDA…RRQR). Residue Lys-107 forms a Glycyl lysine isopeptide (Lys-Gly) (interchain with G-Cter in SUMO1) linkage. Low complexity-rich tracts occupy residues 114-126 (VDSS…ASSP) and 307-320 (QPQV…PSTG). A compositionally biased stretch (basic and acidic residues) spans 326-337 (TVDEDPDERRQR). The bZIP domain maps to 332–395 (DERRQRFLER…AQLKQLLLAH (64 aa)). A basic motif region spans residues 334 to 354 (RRQRFLERNRAAASRCRQKRK). Positions 360 to 388 (LEKKAEELTSQNIQLSNEVTLLRNEVAQL) are leucine-zipper.

This sequence belongs to the bZIP family. Homodimer; binds DNA as homodimer. Heterodimer; heterodimerizes with other members of ATF family and with JUN family members. Interacts with JNK2; the interaction does not phosphorylate ATF7 but acts as a docking site for other ATF-associated partners such as JUN family members. Interacts (via its transactivation domain) with TAF12 the interaction potentiates the transactivation activity and is inhibited by ATF7 sumoylation. Interacts with TAF4; the interaction inhibits the TAF12-dependent transactivation. Interacts with MAPK9; the interaction does not phosphorylate ATF7 but acts as a docking site for ATF7-associated partners such as JUN. Interacts with Ku complex components XRCC6 and XRCC7. Interacts with TERT. In terms of processing, on EGF stimulation, phosphorylated first on Thr-53 allowing subsequent phosphorylation on Thr-51. This latter phosphorylation prevents sumoylation, increases binding to TAF12 and enhances transcriptional activity. Social isolation stress as well as TNF-alpha also induce the phosphorylation of ATF7. Phosphorylated in proliferating colonic and small intestinal epithelial cells. Sumoylation delays nuclear localization and inhibits transactivation activity through preventing binding to TAF12. RANBP2 appears to be the specific E3 ligase.

Its subcellular location is the nucleus. It is found in the nucleoplasm. It localises to the chromosome. The protein localises to the telomere. Stress-responsive chromatin regulator that plays a role in various biological processes including innate immunological memory, adipocyte differentiation or telomerase regulation. In absence of stress, contributes to the formation of heterochromatin and heterochromatin-like structure by recruiting histone H3K9 tri- and di-methyltransferases thus silencing the transcription of target genes such as Htr5b, STAT1 in adipocytes, or genes involved in innate immunity in macrophages and adipocytes. Phosphorylation of ATF7 disrupts interactions with histone methyltransferase and enhances the association with coactivators containing histone acetyltransferase and/or histone demethylase, leading to disruption of the heterochromatin-like structure and subsequently transcriptional activation. In response to TNF-alpha, which is induced by various stresses, phosphorylated ATF7 and telomerase are released from telomeres leading to telomere shortening. Also plays a role in maintaining epithelial regenerative capacity and protecting against cell death during intestinal epithelial damage and repair. The chain is Cyclic AMP-dependent transcription factor ATF-7 (Atf7) from Mus musculus (Mouse).